Here is a 275-residue protein sequence, read N- to C-terminus: NADPH-dependent 7-cyano-7-deazaguanine reductase (275 aa).

81 to 83 (IES) provides a ligand contact to substrate. An NADPH-binding site is contributed by 83–84 (SK). Residue Cys-181 is the Thioimide intermediate of the active site. The active-site Proton donor is Asp-188. Residue 220–221 (HE) participates in substrate binding. 249–250 (RG) provides a ligand contact to NADPH.

Belongs to the GTP cyclohydrolase I family. QueF type 2 subfamily. In terms of assembly, homodimer.

It is found in the cytoplasm. It carries out the reaction 7-aminomethyl-7-carbaguanine + 2 NADP(+) = 7-cyano-7-deazaguanine + 2 NADPH + 3 H(+). Its pathway is tRNA modification; tRNA-queuosine biosynthesis. Catalyzes the NADPH-dependent reduction of 7-cyano-7-deazaguanine (preQ0) to 7-aminomethyl-7-deazaguanine (preQ1). This Xylella fastidiosa (strain M23) protein is NADPH-dependent 7-cyano-7-deazaguanine reductase.